Reading from the N-terminus, the 1394-residue chain is DNA-directed RNA polymerase subunit beta'' (1394 aa).

The Zn(2+) site is built by C224, C295, C302, and C305.

It belongs to the RNA polymerase beta' chain family. RpoC2 subfamily. As to quaternary structure, in plastids the minimal PEP RNA polymerase catalytic core is composed of four subunits: alpha, beta, beta', and beta''. When a (nuclear-encoded) sigma factor is associated with the core the holoenzyme is formed, which can initiate transcription. Requires Zn(2+) as cofactor.

It localises to the plastid. The protein localises to the chloroplast. The enzyme catalyses RNA(n) + a ribonucleoside 5'-triphosphate = RNA(n+1) + diphosphate. Functionally, DNA-dependent RNA polymerase catalyzes the transcription of DNA into RNA using the four ribonucleoside triphosphates as substrates. This chain is DNA-directed RNA polymerase subunit beta'', found in Cucumis sativus (Cucumber).